Here is a 184-residue protein sequence, read N- to C-terminus: Photosystem I assembly protein Ycf4 (184 aa).

Helical transmembrane passes span 19 to 39 (ISNL…VLVG) and 57 to 77 (IIFF…LFIS).

This sequence belongs to the Ycf4 family.

It localises to the plastid thylakoid membrane. Its function is as follows. Seems to be required for the assembly of the photosystem I complex. The polypeptide is Photosystem I assembly protein Ycf4 (Cuscuta reflexa (Southern Asian dodder)).